Consider the following 66-residue polypeptide: Photosystem II reaction center protein J (66 aa).

The segment at 1–27 (MSGKKSGLPDGRVPDRNPDGTPAVPWK) is disordered. A helical membrane pass occupies residues 37 to 57 (LWLVATAGGMAVMFVVGLFFY).

The protein belongs to the PsbJ family. In terms of assembly, PSII is composed of 1 copy each of membrane proteins PsbA, PsbB, PsbC, PsbD, PsbE, PsbF, PsbH, PsbI, PsbJ, PsbK, PsbL, PsbM, PsbT, PsbX, PsbY, PsbZ, Psb30/Ycf12, peripheral proteins PsbO, CyanoQ (PsbQ), PsbU, PsbV and a large number of cofactors. It forms dimeric complexes.

The protein localises to the cellular thylakoid membrane. One of the components of the core complex of photosystem II (PSII). PSII is a light-driven water:plastoquinone oxidoreductase that uses light energy to abstract electrons from H(2)O, generating O(2) and a proton gradient subsequently used for ATP formation. It consists of a core antenna complex that captures photons, and an electron transfer chain that converts photonic excitation into a charge separation. The chain is Photosystem II reaction center protein J from Synechococcus sp. (strain RCC307).